We begin with the raw amino-acid sequence, 976 residues long: Vacuolar membrane protease (976 aa).

Residues 1-15 (MKLKSVFRSVLKYRK) lie on the Cytoplasmic side of the membrane. A helical transmembrane segment spans residues 16 to 36 (TNLSLLLLITYSIITLLYIFD). Over 37-359 (HERYKLNLPK…KFFVISAKTL (323 aa)) the chain is Vacuolar. Residues asparagine 96 and asparagine 121 are each glycosylated (N-linked (GlcNAc...) asparagine). Positions 156 and 168 each coordinate Zn(2+). Residue asparagine 189 is glycosylated (N-linked (GlcNAc...) asparagine). The Proton acceptor role is filled by glutamate 200. Glutamate 201 contacts Zn(2+). N-linked (GlcNAc...) asparagine glycosylation is present at asparagine 217. Zn(2+) contacts are provided by glutamate 226 and histidine 300. Residues 360–380 (FYWNCIFLLVSPVVAIGLYLI) traverse the membrane as a helical segment. Residues 381–392 (SRDRMTWKSYSW) lie on the Cytoplasmic side of the membrane. Residues 393–412 (LSWTRFPLSLAAGIIVQKLF) traverse the membrane as a helical segment. The Vacuolar segment spans residues 413-428 (SNDIIRSNPLTFSRNY). Residues 429–449 (FWPISAFFTQVIFTSYVLINC) traverse the membrane as a helical segment. At 450 to 461 (SNFFFPCADMKS) the chain is on the cytoplasmic side. The chain crosses the membrane as a helical span at residues 462 to 482 (LSIIELFIILWTILLFTSKLL). At 483–496 (YSSDYRYTGLYPLS) the chain is on the vacuolar side. A helical membrane pass occupies residues 497-517 (IFFLLSTIAAILRLLALALGM). Over 518–627 (RTRKRLGREC…NSLKLEYTDY (110 aa)) the chain is Cytoplasmic. The disordered stretch occupies residues 528 to 610 (RDHHSNYSSH…PLLKGSNSME (83 aa)). A compositionally biased stretch (polar residues) spans 549–558 (NLEQPQDQLT). Residues 559-570 (SSQDDQASIQDD) are compositionally biased toward low complexity. The segment covering 582-601 (NVDEDHGMDSSSQQHDERVP) has biased composition (basic and acidic residues). Residues 628–648 (AWIIQFLLIVPIPSFILFNSV) traverse the membrane as a helical segment. Residues 649–668 (DVIMDALNHTVQEGSKATFD) lie on the Vacuolar side of the membrane. A glycan (N-linked (GlcNAc...) asparagine) is linked at asparagine 656. A helical transmembrane segment spans residues 669-689 (VLRFGMVGSILIALPILPFFY). The Cytoplasmic portion of the chain corresponds to 690–692 (KVN). Residues 693–713 (YITISLTALLFLISASKTLLV) form a helical membrane-spanning segment. The Vacuolar portion of the chain corresponds to 714–976 (HPFTNSNPLK…LVIVKDAIIL (263 aa)). 5 N-linked (GlcNAc...) asparagine glycosylation sites follow: asparagine 768, asparagine 796, asparagine 811, asparagine 866, and asparagine 937.

The protein belongs to the peptidase M28 family. The cofactor is Zn(2+). Post-translationally, N-glycosylated.

It is found in the vacuole membrane. Functionally, may be involved in vacuolar sorting and osmoregulation. In Saccharomyces cerevisiae (strain ATCC 204508 / S288c) (Baker's yeast), this protein is Vacuolar membrane protease.